Here is a 359-residue protein sequence, read N- to C-terminus: UDP-2-acetamido-2-deoxy-3-oxo-D-glucuronate aminotransferase (359 aa).

3 residues coordinate UDP-2-acetamido-2-deoxy-alpha-D-ribo-hex-3-uluronate: Gly29, Tyr31, and Ser184. At Lys185 the chain carries N6-(pyridoxal phosphate)lysine. UDP-2-acetamido-2-deoxy-alpha-D-ribo-hex-3-uluronate is bound by residues Arg229, His308, and Tyr309.

It belongs to the DegT/DnrJ/EryC1 family. In terms of assembly, homodimer. Pyridoxal 5'-phosphate is required as a cofactor.

The catalysed reaction is UDP-2-acetamido-2-deoxy-alpha-D-ribo-hex-3-uluronate + L-glutamate = UDP-2-acetamido-3-amino-2,3-dideoxy-alpha-D-glucuronate + 2-oxoglutarate. It participates in bacterial outer membrane biogenesis; LPS O-antigen biosynthesis. Functionally, plays a role in the biosynthesis of B-band O antigen for serotype O5. Catalyzes the amination of UDP-2-acetamido-2-deoxy-3-oxo-D-glucuronic acid (UDP-3-oxo-D-GlcNAcA) to UDP-2-acetamido-3-amino-2,3-dideoxy-D-glucuronic acid (UDP-GlcNAc3NA), using L-glutamate as the preferred amine donor. The protein is UDP-2-acetamido-2-deoxy-3-oxo-D-glucuronate aminotransferase of Pseudomonas aeruginosa (strain ATCC 15692 / DSM 22644 / CIP 104116 / JCM 14847 / LMG 12228 / 1C / PRS 101 / PAO1).